The chain runs to 150 residues: 3-hydroxyacyl-[acyl-carrier-protein] dehydratase FabZ (150 aa).

Residue His51 is part of the active site.

This sequence belongs to the thioester dehydratase family. FabZ subfamily.

The protein localises to the cytoplasm. It catalyses the reaction a (3R)-hydroxyacyl-[ACP] = a (2E)-enoyl-[ACP] + H2O. In terms of biological role, involved in unsaturated fatty acids biosynthesis. Catalyzes the dehydration of short chain beta-hydroxyacyl-ACPs and long chain saturated and unsaturated beta-hydroxyacyl-ACPs. The chain is 3-hydroxyacyl-[acyl-carrier-protein] dehydratase FabZ from Geobacter sulfurreducens (strain ATCC 51573 / DSM 12127 / PCA).